The chain runs to 113 residues: Nucleoid-associated protein EUBREC_0329 (113 aa).

Gly residues predominate over residues 1 to 12 (MARRGGFPGGMP). The segment at 1-45 (MARRGGFPGGMPGNMNNLMKQAQKMQRQMEEAQKQLEDAEVTAKA) is disordered. Basic and acidic residues predominate over residues 27–37 (RQMEEAQKQLE).

The protein belongs to the YbaB/EbfC family. In terms of assembly, homodimer.

It localises to the cytoplasm. The protein localises to the nucleoid. Its function is as follows. Binds to DNA and alters its conformation. May be involved in regulation of gene expression, nucleoid organization and DNA protection. The protein is Nucleoid-associated protein EUBREC_0329 of Agathobacter rectalis (strain ATCC 33656 / DSM 3377 / JCM 17463 / KCTC 5835 / VPI 0990) (Eubacterium rectale).